A 52-amino-acid chain; its full sequence is MAKKDKKTLPPSGAGLVRYFEEETKGPKLTPEQVVVMSIILAVFCLVLRFSG.

The Cytoplasmic portion of the chain corresponds to 1–30 (MAKKDKKTLPPSGAGLVRYFEEETKGPKLT). A helical membrane pass occupies residues 31–50 (PEQVVVMSIILAVFCLVLRF). At 51-52 (SG) the chain is on the extracellular side.

It belongs to the SEC61-beta family. As to quaternary structure, component of the protein translocase complex. Heterotrimer consisting of alpha (SecY), beta (SecG) and gamma (SecE) subunits. Can form oligomers of the heterotrimer.

It localises to the cell membrane. Involved in protein export. The function of the beta subunit is unknown, but it may be involved in stabilization of the trimeric complex. The polypeptide is Preprotein translocase subunit SecG (secG) (Methanothermobacter thermautotrophicus (strain ATCC 29096 / DSM 1053 / JCM 10044 / NBRC 100330 / Delta H) (Methanobacterium thermoautotrophicum)).